Consider the following 91-residue polypeptide: DNA-directed RNA polymerase subunit omega (91 aa).

It belongs to the RNA polymerase subunit omega family. The RNAP catalytic core consists of 2 alpha, 1 beta, 1 beta' and 1 omega subunit. When a sigma factor is associated with the core the holoenzyme is formed, which can initiate transcription.

It carries out the reaction RNA(n) + a ribonucleoside 5'-triphosphate = RNA(n+1) + diphosphate. Promotes RNA polymerase assembly. Latches the N- and C-terminal regions of the beta' subunit thereby facilitating its interaction with the beta and alpha subunits. This chain is DNA-directed RNA polymerase subunit omega, found in Sodalis glossinidius (strain morsitans).